A 316-amino-acid chain; its full sequence is 4-hydroxy-3-methylbut-2-enyl diphosphate reductase (316 aa).

Residue Cys18 participates in [4Fe-4S] cluster binding. (2E)-4-hydroxy-3-methylbut-2-enyl diphosphate-binding residues include His47 and His80. His47 and His80 together coordinate dimethylallyl diphosphate. 2 residues coordinate isopentenyl diphosphate: His47 and His80. Cys102 provides a ligand contact to [4Fe-4S] cluster. His130 is a binding site for (2E)-4-hydroxy-3-methylbut-2-enyl diphosphate. His130 contributes to the dimethylallyl diphosphate binding site. His130 is a binding site for isopentenyl diphosphate. The active-site Proton donor is Glu132. Thr171 lines the (2E)-4-hydroxy-3-methylbut-2-enyl diphosphate pocket. [4Fe-4S] cluster is bound at residue Cys201. Residues Ser229, Ser230, Asn231, and Ser274 each contribute to the (2E)-4-hydroxy-3-methylbut-2-enyl diphosphate site. Residues Ser229, Ser230, Asn231, and Ser274 each contribute to the dimethylallyl diphosphate site. Ser229, Ser230, Asn231, and Ser274 together coordinate isopentenyl diphosphate.

It belongs to the IspH family. [4Fe-4S] cluster is required as a cofactor.

It carries out the reaction isopentenyl diphosphate + 2 oxidized [2Fe-2S]-[ferredoxin] + H2O = (2E)-4-hydroxy-3-methylbut-2-enyl diphosphate + 2 reduced [2Fe-2S]-[ferredoxin] + 2 H(+). The enzyme catalyses dimethylallyl diphosphate + 2 oxidized [2Fe-2S]-[ferredoxin] + H2O = (2E)-4-hydroxy-3-methylbut-2-enyl diphosphate + 2 reduced [2Fe-2S]-[ferredoxin] + 2 H(+). It participates in isoprenoid biosynthesis; dimethylallyl diphosphate biosynthesis; dimethylallyl diphosphate from (2E)-4-hydroxy-3-methylbutenyl diphosphate: step 1/1. Its pathway is isoprenoid biosynthesis; isopentenyl diphosphate biosynthesis via DXP pathway; isopentenyl diphosphate from 1-deoxy-D-xylulose 5-phosphate: step 6/6. Its function is as follows. Catalyzes the conversion of 1-hydroxy-2-methyl-2-(E)-butenyl 4-diphosphate (HMBPP) into a mixture of isopentenyl diphosphate (IPP) and dimethylallyl diphosphate (DMAPP). Acts in the terminal step of the DOXP/MEP pathway for isoprenoid precursor biosynthesis. The polypeptide is 4-hydroxy-3-methylbut-2-enyl diphosphate reductase (Paracoccus denitrificans (strain Pd 1222)).